Consider the following 241-residue polypeptide: Transcription initiation factor TFIID subunit 14 (241 aa).

Residues 1–137 form the YEATS domain; that stretch reads MTTVKRTVRL…PGLLKALTAT (137 aa). A disordered region spans residues 141 to 169; sequence PGYSDEGEEARKDKRKNESEVGAGKKKAK. The span at 149 to 159 shows a compositional bias: basic and acidic residues; sequence EARKDKRKNES.

This sequence belongs to the TAF14 family. Component of the fcp1/TFIIF/polII complex via interaction of tfg3 with both tfg1/TFIIF-alpha and tfg2/TFIIF-beta subunits. Component of the SWI/SNF global transcription activator complex composed of at least arp9, arp42, snf5, snf22, snf30, sbf59, sol1, ssr1, ssr2, ssr3, ssr4 and tfg3. Also interacts with the TATA-binding protein (TBP). Component of the mst2 complex composed of at least eaf6, mst2, nto1, pdp3, ptf1, ptf2 and tfg3.

It is found in the nucleus. Its subcellular location is the nucleoplasm. Its function is as follows. Functions as a component of the DNA-binding general transcription factor complex TFIID, and the RNA polymerase II associated general transcription factor complex TFIIF. Binding of TFIID to a promoter (with or without TATA element) is the initial step in preinitiation complex (PIC) formation. TFIID plays a key role in the regulation of gene expression by RNA polymerase II through different activities such as transcription activator interaction, core promoter recognition and selectivity, TFIIA and TFIIB interaction, facilitation of DNA opening and initiation of transcription. TFIIF is essential for the initiation of transcription by RNA polymerase II. TFIIF functions include the recruitment of RNA polymerase II to the promoter bound DNA-TBP-TFIIB complex, decreasing the affinity of RNA polymerase II for non-specific DNA, allowing for the subsequent recruitment of TFIIE and TFIIH, and facilitating RNA polymerase II elongation. The TAF14 subunit has stimulatory activity. Component of the SWI/SNF complex, an ATP-dependent chromatin remodeling complex, required for the positive and negative regulation of gene expression of a large number of genes. It changes chromatin structure by altering DNA-histone contacts within a nucleosome, leading eventually to a change in nucleosome position, thus facilitating or repressing binding of gene-specific transcription factors. Component of the mst2 complex which is a highly specific H3 lysine 14 (H3K14) acetyltransferase that functions together with gcn5 to regulate global levels of H3K14 acetylation (H3K14ac), critical for DNA damage checkpoint activation. The protein is Transcription initiation factor TFIID subunit 14 (tfg3) of Schizosaccharomyces pombe (strain 972 / ATCC 24843) (Fission yeast).